The chain runs to 496 residues: Glutamyl-tRNA(Gln) amidotransferase subunit A (496 aa).

Active-site charge relay system residues include lysine 75 and serine 150. The Acyl-ester intermediate role is filled by serine 174.

It belongs to the amidase family. GatA subfamily. In terms of assembly, heterotrimer of A, B and C subunits.

The catalysed reaction is L-glutamyl-tRNA(Gln) + L-glutamine + ATP + H2O = L-glutaminyl-tRNA(Gln) + L-glutamate + ADP + phosphate + H(+). Functionally, allows the formation of correctly charged Gln-tRNA(Gln) through the transamidation of misacylated Glu-tRNA(Gln) in organisms which lack glutaminyl-tRNA synthetase. The reaction takes place in the presence of glutamine and ATP through an activated gamma-phospho-Glu-tRNA(Gln). The protein is Glutamyl-tRNA(Gln) amidotransferase subunit A of Burkholderia pseudomallei (strain 1106a).